Reading from the N-terminus, the 114-residue chain is Ribonuclease P protein component (114 aa).

This sequence belongs to the RnpA family. Consists of a catalytic RNA component (M1 or rnpB) and a protein subunit.

The catalysed reaction is Endonucleolytic cleavage of RNA, removing 5'-extranucleotides from tRNA precursor.. In terms of biological role, RNaseP catalyzes the removal of the 5'-leader sequence from pre-tRNA to produce the mature 5'-terminus. It can also cleave other RNA substrates such as 4.5S RNA. The protein component plays an auxiliary but essential role in vivo by binding to the 5'-leader sequence and broadening the substrate specificity of the ribozyme. This is Ribonuclease P protein component from Limosilactobacillus fermentum (strain NBRC 3956 / LMG 18251) (Lactobacillus fermentum).